Consider the following 517-residue polypeptide: Ribose import ATP-binding protein RbsA 1 (517 aa).

ABC transporter domains lie at 11 to 251 and 263 to 507; these read LEMR…VGRD and YDPG…ALAT. 43–50 serves as a coordination point for ATP; sequence GENGAGKS.

It belongs to the ABC transporter superfamily. Ribose importer (TC 3.A.1.2.1) family. As to quaternary structure, the complex is composed of an ATP-binding protein (RbsA), two transmembrane proteins (RbsC) and a solute-binding protein (RbsB).

The protein localises to the cell inner membrane. The enzyme catalyses D-ribose(out) + ATP + H2O = D-ribose(in) + ADP + phosphate + H(+). Its function is as follows. Part of the ABC transporter complex RbsABC involved in ribose import. Responsible for energy coupling to the transport system. The polypeptide is Ribose import ATP-binding protein RbsA 1 (Burkholderia cenocepacia (strain HI2424)).